Reading from the N-terminus, the 274-residue chain is NADPH-dependent 7-cyano-7-deazaguanine reductase (274 aa).

80-82 (VES) provides a ligand contact to substrate. Residue 82-83 (SK) coordinates NADPH. Cys-181 (thioimide intermediate) is an active-site residue. Asp-188 serves as the catalytic Proton donor. 220–221 (HE) contacts substrate. Residue 249-250 (RG) participates in NADPH binding.

The protein belongs to the GTP cyclohydrolase I family. QueF type 2 subfamily. As to quaternary structure, homodimer.

It localises to the cytoplasm. The catalysed reaction is 7-aminomethyl-7-carbaguanine + 2 NADP(+) = 7-cyano-7-deazaguanine + 2 NADPH + 3 H(+). Its pathway is tRNA modification; tRNA-queuosine biosynthesis. Catalyzes the NADPH-dependent reduction of 7-cyano-7-deazaguanine (preQ0) to 7-aminomethyl-7-deazaguanine (preQ1). In Burkholderia multivorans (strain ATCC 17616 / 249), this protein is NADPH-dependent 7-cyano-7-deazaguanine reductase.